We begin with the raw amino-acid sequence, 667 residues long: Soluble guanylate cyclase 89Da (667 aa).

His104 contributes to the heme binding site. The disordered stretch occupies residues 337-364; that stretch reads AQEFSESHPVDDDESAREDEIDPATGER. Acidic residues predominate over residues 347–358; sequence DDDESAREDEID. Positions 427–455 form a coiled coil; sequence QHCSKLEIMFEKEEQRSDELEKSLELADS. Residues 491–617 form the Guanylate cyclase domain; the sequence is SVIFLEVMNV…DTVNTASRME (127 aa).

It belongs to the adenylyl cyclase class-4/guanylyl cyclase family. In terms of assembly, heterodimer; with Gyc88E, in the presence of magnesium or manganese. The cofactor is heme.

Its subcellular location is the cytoplasm. The catalysed reaction is GTP = 3',5'-cyclic GMP + diphosphate. Its activity is regulated as follows. Probably not activated by nitric oxide (NO). Heterodimer also exhibits some stimulation, some compounds (SIN-1 and two of the NONOates) that were ineffective at stimulating Gyc-88E alone did stimulate the heterodimer. Functionally, heterodimers with Gyc-89Da and Gyc-89Db are activated in response to changing oxygen concentrations, alerting flies to hypoxic environments. Under normal oxygen concentrations, oxygen binds to the heme group and results in low levels of guanylyl cyclase activity. When exposed to reduced oxygen concentrations, the oxygen dissociates from the heme group resulting in activation of the enzyme. This chain is Soluble guanylate cyclase 89Da, found in Drosophila melanogaster (Fruit fly).